The chain runs to 208 residues: NAD(P)H-quinone oxidoreductase subunit I (208 aa).

4Fe-4S ferredoxin-type domains are found at residues 55–84 (GRIH…VDWV) and 95–124 (RNYS…MTEE). Cysteine 64, cysteine 67, cysteine 70, cysteine 74, cysteine 104, cysteine 107, cysteine 110, and cysteine 114 together coordinate [4Fe-4S] cluster.

This sequence belongs to the complex I 23 kDa subunit family. In terms of assembly, NDH-1 is composed of at least 11 different subunits. It depends on [4Fe-4S] cluster as a cofactor.

The protein localises to the cellular thylakoid membrane. It carries out the reaction a plastoquinone + NADH + (n+1) H(+)(in) = a plastoquinol + NAD(+) + n H(+)(out). The enzyme catalyses a plastoquinone + NADPH + (n+1) H(+)(in) = a plastoquinol + NADP(+) + n H(+)(out). In terms of biological role, NDH-1 shuttles electrons from an unknown electron donor, via FMN and iron-sulfur (Fe-S) centers, to quinones in the respiratory and/or the photosynthetic chain. The immediate electron acceptor for the enzyme in this species is believed to be plastoquinone. Couples the redox reaction to proton translocation, and thus conserves the redox energy in a proton gradient. The chain is NAD(P)H-quinone oxidoreductase subunit I from Prochlorococcus marinus (strain AS9601).